The primary structure comprises 347 residues: Core-capsid bridging protein (347 aa).

A disordered region spans residues G290–L320. Positions S304–A318 are enriched in basic residues.

It belongs to the adenoviridae core-capsid bridging protein family. In terms of assembly, monomer. Homodimer. Exists in equilibrium between monomers and dimers in solution. Interacts with the histone-like nucleoprotein; this interactions bridge the virus core to the capsid. Interacts with core protein X; this interactions bridge the virus core to the capsid. Interacts with the endosome lysis protein VI; this interactions bridge the virus core to the capsid. Interacts with the peripentonal hexons. Interacts with host NPM1; this interaction might play a role in virus assembly.

Its subcellular location is the virion. The protein resides in the host nucleus. The protein localises to the host nucleolus. Its function is as follows. Associates loosely with the viral DNA to form an outer shell around the nucleoprotein-DNA complex and links it with the capsid by binding the endosome lysis protein. Dissociates from the viral genome during entry. Might be involved in nuclear capsid assembly of the viral particles through its association with NPM1/nucleophosmin. The protein is Core-capsid bridging protein of Homo sapiens (Human).